We begin with the raw amino-acid sequence, 59 residues long: MEIVLEAKERTDKKRSTLRRIRSQGGIPAILYGKKVENKMIFVTAAELEKVLREGGRTS.

Belongs to the bacterial ribosomal protein bL25 family.

This Bacillus caldolyticus protein is Large ribosomal subunit protein bL25 (ctc).